The chain runs to 272 residues: GPN-loop GTPase 3 (272 aa).

GTP is bound at residue 12–17 (GAGKST). The Gly-Pro-Asn (GPN)-loop; involved in dimer interface motif lies at 69 to 71 (GPN). A GTP-binding site is contributed by 172–175 (SKMD). Residues 253 to 272 (QYGEDEEPKVPKDMDDGDFD) form a disordered region.

Belongs to the GPN-loop GTPase family. As to quaternary structure, heterodimers with GPN1 or GPN2. Binds to RNA polymerase II (RNAPII).

Small GTPase required for proper nuclear import of RNA polymerase II and III (RNAPII and RNAPIII). May act at an RNAP assembly step prior to nuclear import. The polypeptide is GPN-loop GTPase 3 (Cryptococcus neoformans var. neoformans serotype D (strain JEC21 / ATCC MYA-565) (Filobasidiella neoformans)).